A 502-amino-acid chain; its full sequence is Glycerol kinase (502 aa).

Thr-14 provides a ligand contact to ADP. The ATP site is built by Thr-14, Thr-15, and Ser-16. Thr-14 provides a ligand contact to sn-glycerol 3-phosphate. Arg-18 is an ADP binding site. 4 residues coordinate sn-glycerol 3-phosphate: Arg-84, Glu-85, Tyr-136, and Asp-246. The glycerol site is built by Arg-84, Glu-85, Tyr-136, Asp-246, and Gln-247. ADP contacts are provided by Thr-268 and Gly-311. Thr-268, Gly-311, Gln-315, and Gly-412 together coordinate ATP. Gly-412 and Asn-416 together coordinate ADP.

This sequence belongs to the FGGY kinase family. In terms of assembly, homotetramer and homodimer (in equilibrium). Heterodimer with EIIA-Glc. Binds 1 zinc ion per glycerol kinase EIIA-Glc dimer. The zinc ion is important for dimerization.

The catalysed reaction is glycerol + ATP = sn-glycerol 3-phosphate + ADP + H(+). The protein operates within polyol metabolism; glycerol degradation via glycerol kinase pathway; sn-glycerol 3-phosphate from glycerol: step 1/1. With respect to regulation, activity of this regulatory enzyme is affected by several metabolites. Allosterically and non-competitively inhibited by fructose 1,6-bisphosphate (FBP) and unphosphorylated phosphocarrier protein EIIA-Glc (III-Glc), an integral component of the bacterial phosphotransferase (PTS) system. Functionally, key enzyme in the regulation of glycerol uptake and metabolism. Catalyzes the phosphorylation of glycerol to yield sn-glycerol 3-phosphate. The polypeptide is Glycerol kinase (Salmonella heidelberg (strain SL476)).